Reading from the N-terminus, the 491-residue chain is Protein nucleotidyltransferase YdiU (491 aa).

Residues Gly92, Gly94, Arg95, Lys115, Asp127, Gly128, Arg178, and Arg185 each contribute to the ATP site. Catalysis depends on Asp254, which acts as the Proton acceptor. Mg(2+) is bound by residues Asn255 and Asp264. Asp264 contacts ATP.

This sequence belongs to the SELO family. It depends on Mg(2+) as a cofactor. Requires Mn(2+) as cofactor.

It catalyses the reaction L-seryl-[protein] + ATP = 3-O-(5'-adenylyl)-L-seryl-[protein] + diphosphate. It carries out the reaction L-threonyl-[protein] + ATP = 3-O-(5'-adenylyl)-L-threonyl-[protein] + diphosphate. The enzyme catalyses L-tyrosyl-[protein] + ATP = O-(5'-adenylyl)-L-tyrosyl-[protein] + diphosphate. The catalysed reaction is L-histidyl-[protein] + UTP = N(tele)-(5'-uridylyl)-L-histidyl-[protein] + diphosphate. It catalyses the reaction L-seryl-[protein] + UTP = O-(5'-uridylyl)-L-seryl-[protein] + diphosphate. It carries out the reaction L-tyrosyl-[protein] + UTP = O-(5'-uridylyl)-L-tyrosyl-[protein] + diphosphate. Nucleotidyltransferase involved in the post-translational modification of proteins. It can catalyze the addition of adenosine monophosphate (AMP) or uridine monophosphate (UMP) to a protein, resulting in modifications known as AMPylation and UMPylation. The polypeptide is Protein nucleotidyltransferase YdiU (Mycolicibacterium paratuberculosis (strain ATCC BAA-968 / K-10) (Mycobacterium paratuberculosis)).